A 591-amino-acid polypeptide reads, in one-letter code: MSSYDRRFADPNSYRQRSGAPVGSSQPMDPSAAPYNPRYTGGGGGYGPSPVMAGDNSGYNRYPSFQPPSGGFSVGRGGGRGGYGQYGDRNGGGNWGGGGGRGGSSKRELDSVSLPKQNFGNLVHFEKNFYVESPTVQAMTEQDVAMYRTERDISVEGRDVPKPMKMFQDANFPDNILEAIAKLGFTEPTPIQAQGWPMALKGRDLIGIAETGSGKTLAYLLPALVHVSAQPRLGQDDGPIVLILAPTRELAVQIQEESRKFGLRSGVRSTCIYGGAPKGPQIRDLRRGVEIVIATPGRLIDMLECQHTNLKRVTYLVLDEADRMLDMGFEPQIRKIVSQIRPDRQTLLWSATWPREVETLARQFLRDPYKAIIGSTDLKANQSINQVIEIVPTPEKYNRLLTLLKQLMDGSKILIFVETKRGCDQVTRQLRMDGWPALAIHGDKTQSERDRVLAEFKSGRSPIMTATDVAARGLDVKDIKCVVNYDFPNTLEDYIHRIGRTGRAGAKGMAFTFFTHDNAKFARELVKILQEAGQVVPPTLSALVRSSGSGYGGSGGGRNFRPRGGGRGGGFGDKRSRSTSNFVPHGGKRTW.

Positions 1-109 (MSSYDRRFAD…GRGGSSKREL (109 aa)) are disordered. A compositionally biased stretch (gly residues) spans 72–103 (FSVGRGGGRGGYGQYGDRNGGGNWGGGGGRGG). The Q motif motif lies at 165–193 (KMFQDANFPDNILEAIAKLGFTEPTPIQA). Positions 196–371 (WPMALKGRDL…RQFLRDPYKA (176 aa)) constitute a Helicase ATP-binding domain. ATP is bound at residue 209-216 (AETGSGKT). Residues 319–322 (DEAD) carry the DEAD box motif. Positions 399 to 544 (RLLTLLKQLM…VVPPTLSALV (146 aa)) constitute a Helicase C-terminal domain. A disordered region spans residues 547 to 591 (SGSGYGGSGGGRNFRPRGGGRGGGFGDKRSRSTSNFVPHGGKRTW). The span at 549-571 (SGYGGSGGGRNFRPRGGGRGGGF) shows a compositional bias: gly residues.

Belongs to the DEAD box helicase family. DDX5/DBP2 subfamily.

It is found in the nucleus. It catalyses the reaction ATP + H2O = ADP + phosphate + H(+). In terms of biological role, ATP-dependent RNA helicase involved nonsense-mediated mRNA decay and ribosome biogenesis through rRNA processing. The polypeptide is DEAD-box ATP-dependent RNA helicase 30 (RH30) (Arabidopsis thaliana (Mouse-ear cress)).